The sequence spans 164 residues: Ribosome-binding factor A (164 aa).

The segment at Ala-123–Arg-164 is disordered. The span at Gly-132–Glu-149 shows a compositional bias: acidic residues. Positions Ala-155 to Arg-164 are enriched in pro residues.

Belongs to the RbfA family. Monomer. Binds 30S ribosomal subunits, but not 50S ribosomal subunits or 70S ribosomes.

The protein localises to the cytoplasm. Functionally, one of several proteins that assist in the late maturation steps of the functional core of the 30S ribosomal subunit. Associates with free 30S ribosomal subunits (but not with 30S subunits that are part of 70S ribosomes or polysomes). Required for efficient processing of 16S rRNA. May interact with the 5'-terminal helix region of 16S rRNA. The sequence is that of Ribosome-binding factor A from Rhodospirillum rubrum (strain ATCC 11170 / ATH 1.1.1 / DSM 467 / LMG 4362 / NCIMB 8255 / S1).